The sequence spans 493 residues: Acetylcholine receptor subunit epsilon (493 aa).

The N-terminal stretch at 1–20 (MARAPLGVLLLLGLLGRGVG) is a signal peptide. Residues 21-239 (KNEELRLYHH…VIYSLIIRRK (219 aa)) are Extracellular-facing. 2 N-linked (GlcNAc...) asparagine glycosylation sites follow: asparagine 86 and asparagine 161. A disulfide bridge connects residues cysteine 148 and cysteine 162. A helical membrane pass occupies residues 240-264 (PLFYVINIIVPCVLISGLVLLAYFL). The Cytoplasmic portion of the chain corresponds to 265–272 (PAQAGGQK). Residues 273–291 (CTVSINVLLAQTVFLFLIA) traverse the membrane as a helical segment. Over 292–306 (QKIPETSLSVPLLGR) the chain is Extracellular. The chain crosses the membrane as a helical span at residues 307-328 (FLIFVMVVATLIVMNCVIVLNV). At 329–456 (SQRTPTTHAM…WVRMGNALDN (128 aa)) the chain is on the cytoplasmic side. The chain crosses the membrane as a helical span at residues 457-480 (ICFWAALVLFSVGSSLIFLGAYFN). At 481-493 (RVPDLPYAPCIQP) the chain is on the extracellular side.

This sequence belongs to the ligand-gated ion channel (TC 1.A.9) family. Acetylcholine receptor (TC 1.A.9.1) subfamily. Epsilon/CHRNE sub-subfamily. Pentamer of two alpha chains, and one each of the beta, delta, and gamma (in immature muscle) or epsilon (in mature muscle) chains. The muscle heteropentamer composed of alpha-1, beta-1, delta, epsilon subunits interacts with the alpha-conotoxin ImII.

It is found in the postsynaptic cell membrane. The protein resides in the cell membrane. It catalyses the reaction K(+)(in) = K(+)(out). The catalysed reaction is Na(+)(in) = Na(+)(out). Its function is as follows. After binding acetylcholine, the AChR responds by an extensive change in conformation that affects all subunits and leads to opening of an ion-conducting channel across the plasma membrane. The protein is Acetylcholine receptor subunit epsilon of Homo sapiens (Human).